The primary structure comprises 459 residues: Argininosuccinate lyase (459 aa).

Residues Asp-440–Pro-459 are disordered.

Belongs to the lyase 1 family. Argininosuccinate lyase subfamily.

It is found in the cytoplasm. It carries out the reaction 2-(N(omega)-L-arginino)succinate = fumarate + L-arginine. It functions in the pathway amino-acid biosynthesis; L-arginine biosynthesis; L-arginine from L-ornithine and carbamoyl phosphate: step 3/3. This chain is Argininosuccinate lyase, found in Pyrococcus furiosus (strain ATCC 43587 / DSM 3638 / JCM 8422 / Vc1).